The primary structure comprises 273 residues: F-actin-capping protein subunit alpha (273 aa).

This sequence belongs to the F-actin-capping protein alpha subunit family. As to quaternary structure, heterodimer of an alpha and a beta subunit.

Its subcellular location is the cytoplasm. The protein localises to the cytoskeleton. F-actin-capping proteins bind in a Ca(2+)-independent manner to the fast growing ends of actin filaments (barbed end) thereby blocking the exchange of subunits at these ends. Unlike other capping proteins (such as gelsolin and severin), these proteins do not sever actin filaments. The protein is F-actin-capping protein subunit alpha (CAP1) of Gibberella zeae (strain ATCC MYA-4620 / CBS 123657 / FGSC 9075 / NRRL 31084 / PH-1) (Wheat head blight fungus).